Consider the following 100-residue polypeptide: UPF0251 protein VV2_0946 (100 aa).

It belongs to the UPF0251 family.

The protein is UPF0251 protein VV2_0946 of Vibrio vulnificus (strain CMCP6).